We begin with the raw amino-acid sequence, 206 residues long: Cytidylate kinase (206 aa).

Position 9 to 17 (9 to 17 (GPAAAGKGT)) interacts with ATP. The segment covering 155 to 168 (LRERDRRDREREAA) has biased composition (basic and acidic residues). The tract at residues 155 to 174 (LRERDRRDREREAAPLRPAP) is disordered.

Belongs to the cytidylate kinase family. Type 1 subfamily.

The protein localises to the cytoplasm. It carries out the reaction CMP + ATP = CDP + ADP. The enzyme catalyses dCMP + ATP = dCDP + ADP. The sequence is that of Cytidylate kinase from Cereibacter sphaeroides (strain KD131 / KCTC 12085) (Rhodobacter sphaeroides).